The sequence spans 497 residues: Glycerol kinase (497 aa).

Threonine 13 contacts ADP. Threonine 13, threonine 14, and serine 15 together coordinate ATP. Threonine 13 lines the sn-glycerol 3-phosphate pocket. Arginine 17 contacts ADP. 3 residues coordinate sn-glycerol 3-phosphate: arginine 83, glutamate 84, and tyrosine 135. Positions 83, 84, and 135 each coordinate glycerol. Histidine 231 carries the post-translational modification Phosphohistidine; by HPr. Position 245 (aspartate 245) interacts with sn-glycerol 3-phosphate. 2 residues coordinate glycerol: aspartate 245 and glutamine 246. Residues threonine 267 and glycine 310 each coordinate ADP. ATP contacts are provided by threonine 267, glycine 310, glutamine 314, and glycine 411. The ADP site is built by glycine 411 and asparagine 415.

The protein belongs to the FGGY kinase family. Homotetramer and homodimer (in equilibrium). Post-translationally, the phosphoenolpyruvate-dependent sugar phosphotransferase system (PTS), including enzyme I, and histidine-containing protein (HPr) are required for the phosphorylation, which leads to the activation of the enzyme.

The catalysed reaction is glycerol + ATP = sn-glycerol 3-phosphate + ADP + H(+). Its pathway is polyol metabolism; glycerol degradation via glycerol kinase pathway; sn-glycerol 3-phosphate from glycerol: step 1/1. Its activity is regulated as follows. Activated by phosphorylation and inhibited by fructose 1,6-bisphosphate (FBP). Functionally, key enzyme in the regulation of glycerol uptake and metabolism. Catalyzes the phosphorylation of glycerol to yield sn-glycerol 3-phosphate. The protein is Glycerol kinase of Listeria innocua serovar 6a (strain ATCC BAA-680 / CLIP 11262).